The chain runs to 626 residues: Putative folylpolyglutamate synthase (626 aa).

144-147 contributes to the ATP binding site; that stretch reads GKGS. Mg(2+) contacts are provided by serine 168, glutamate 235, and histidine 263. Positions 412 and 430 each coordinate ATP.

It belongs to the folylpolyglutamate synthase family.

The enzyme catalyses (6S)-5,6,7,8-tetrahydrofolyl-(gamma-L-Glu)(n) + L-glutamate + ATP = (6S)-5,6,7,8-tetrahydrofolyl-(gamma-L-Glu)(n+1) + ADP + phosphate + H(+). The protein operates within cofactor biosynthesis; tetrahydrofolylpolyglutamate biosynthesis. Functionally, conversion of folates to polyglutamate derivatives. This chain is Putative folylpolyglutamate synthase (folC), found in Dictyostelium discoideum (Social amoeba).